A 204-amino-acid chain; its full sequence is MSNFTAKVPLSERMADVLISKDRWKDDEEGYLKVKYGLEIILINVMKFAIVYGIALVTGLLLQTVTVHLSYLWLRRYSFGLHATKTLNCTLISLTMFVLAPFIFQNIPSNNWIVLGTFAFILLNMFLFAPADTESLPLIGEEHRKKLKRKAMIGTLILTGIALLIPFAEMKTLIMVGSLFQVISINPLTYKLLKRRYRNYEKYE.

The next 5 membrane-spanning stretches (helical) occupy residues 51-73 (VYGI…SYLW), 87-107 (LNCT…FQNI), 111-131 (NWIV…FAPA), 151-168 (AMIG…IPFA), and 173-190 (LIMV…PLTY).

It belongs to the AgrB family.

It localises to the cell membrane. Its function is as follows. May be involved in the proteolytic processing of a quorum sensing system signal molecule precursor. This is Putative AgrB-like protein from Listeria innocua serovar 6a (strain ATCC BAA-680 / CLIP 11262).